The chain runs to 183 residues: Intermembrane phospholipid transport system binding protein MlaD (183 aa).

Over 1–7 the chain is Cytoplasmic; it reads MQTKKNE. Residues 8–28 form a helical; Signal-anchor for type II membrane protein membrane-spanning segment; that stretch reads IWVGIFLLAALLAALFVCLKA. The Periplasmic portion of the chain corresponds to 29 to 183; that stretch reads ANVTSIRTEP…ETTEPVGTTK (155 aa). Positions 39-116 are MCE/MlaD; it reads TYTLYATFDN…LGEQYLALNV (78 aa). The interval 155–183 is disordered; it reads KGDDNKNSGDAPAAAPGNNETTEPVGTTK. Residues 172–183 show a composition bias toward polar residues; that stretch reads NNETTEPVGTTK.

It belongs to the MlaD family. The complex is composed of two ATP-binding proteins (MlaF), two transmembrane proteins (MlaE), two cytoplasmic solute-binding proteins (MlaB) and six periplasmic solute-binding proteins (MlaD).

The protein localises to the cell inner membrane. In terms of biological role, part of the ABC transporter complex MlaFEDB, which is involved in a phospholipid transport pathway that maintains lipid asymmetry in the outer membrane by retrograde trafficking of phospholipids from the outer membrane to the inner membrane. MlaD functions in substrate binding with strong affinity for phospholipids and modulates ATP hydrolytic activity of the complex. The polypeptide is Intermembrane phospholipid transport system binding protein MlaD (Escherichia coli O157:H7).